The sequence spans 962 residues: Glycine dehydrogenase (decarboxylating) (962 aa).

The residue at position 709 (Lys-709) is an N6-(pyridoxal phosphate)lysine.

It belongs to the GcvP family. In terms of assembly, the glycine cleavage system is composed of four proteins: P, T, L and H. Requires pyridoxal 5'-phosphate as cofactor.

The enzyme catalyses N(6)-[(R)-lipoyl]-L-lysyl-[glycine-cleavage complex H protein] + glycine + H(+) = N(6)-[(R)-S(8)-aminomethyldihydrolipoyl]-L-lysyl-[glycine-cleavage complex H protein] + CO2. In terms of biological role, the glycine cleavage system catalyzes the degradation of glycine. The P protein binds the alpha-amino group of glycine through its pyridoxal phosphate cofactor; CO(2) is released and the remaining methylamine moiety is then transferred to the lipoamide cofactor of the H protein. This is Glycine dehydrogenase (decarboxylating) from Shewanella frigidimarina (strain NCIMB 400).